Consider the following 590-residue polypeptide: Arginine--tRNA ligase, cytoplasmic (590 aa).

A2 carries the post-translational modification N-acetylalanine. Residues 137–139, H148, Y322, D326, and Q350 contribute to the L-arginine site; that span reads SPN. A 'HIGH' region motif is present at residues 138–149; the sequence is PNIAKEMHVGHL. Positions 470–484 are interaction with tRNA; it reads DTAVYLLYAHARICS.

This sequence belongs to the class-I aminoacyl-tRNA synthetase family.

Its subcellular location is the cytoplasm. It localises to the cytosol. The catalysed reaction is tRNA(Arg) + L-arginine + ATP = L-arginyl-tRNA(Arg) + AMP + diphosphate. Forms part of a macromolecular complex that catalyzes the attachment of specific amino acids to cognate tRNAs during protein synthesis. The polypeptide is Arginine--tRNA ligase, cytoplasmic (Arabidopsis thaliana (Mouse-ear cress)).